Consider the following 1077-residue polypeptide: MPRRKQQAPRRSAAYVPAEELKAAETEEDNLEDDGLSLDVQDSEYLYNDEHEIKETQSYQNSPISSATNPDAGYGSPFSEASDHLADFKSTSSKEGQDKEDGQSTENASYPTDSLAQIKAVYTNLLSECCWSNLALDLKKSNEKASPTTNTDKSSKSEASGPTSDPGTPTTITSSSCTNTSTSICVTTSNSAISNTASGYDWHQAALAKTLQQTSYGLLPEPSLFSTVQLYRQSNKLYGSVFTGASKFRCKDCSAAYDTLVELTVHMNETGHYRDDNRDREAERTKRWSKPRKRSLMEMEGKEDAQKVLKCMYCGHSFESLQDLSVHMIKTKHYQKVPLKEPVPAITKLVPSTKKRALQDIALPDSPEQAGISPGASVSESAKDPKAANPYVTPNNRYGYQNGASYTWQFEARKAQILKCMECGSSHDTLQQLTAHMMVTGHFLKVTNSASKKGKQLVMDAVLEEKIQSIPLPPTTHARLPATYIKKPPDSPTGSTHSEEKKDPEKEKVNIGEVEKKIKEENEDPEKIEPATLYQYLREEDLDDSPKGGLDILKSLENTVSSAISKAQNGAPSWGGYPSIHAAYQLPGTIKALQPSVQSVQIQPSYASSVKTMSSDHNALIHSPGSLTPPPHKSNVSAMEELVEKVTGKINVKKEEKVLEKEKVISAKPPSPMAKENKEILKPEEANSKTLKKHNEAEIQKPKKETPIESHALNGTEPLKAKVTNGCTSLGIITDHSPEQSFINPLSALQSIMNTHLGKVSKPVSPSLDPLAMLYKISNSMLDKPIYPTTPMKQVESIDRYYYEDSDQPIDLTKSKNKPLVTSITDPVSSPLRESALMDISDMVKNLTGRLTPKSSTPSTVSEKSDADGSSFEEALDELSPVHKRKGRQSNWNPQHLLILQAQFASSLRETAEGKYIMSDLGPQERVHISKFTGLSMTTISHWLANVKYQLRRTGGTKFLKNLDTGHPVFFCNDCASQFRTASTYIGHLETHLGFSLKDLSKLSLNQIQEQQNVTKVITNKALSSVGLIEEDSGSTFQCKLCNRTFASKHAVKLHLSKTHGKSPEDHVIYVTELEKQ.

Disordered stretches follow at residues 1 to 110 (MPRR…NASY) and 142 to 179 (NEKA…SCTN). A compositionally biased stretch (acidic residues) spans 26 to 36 (TEEDNLEDDGL). Residues 56–69 (TQSYQNSPISSATN) are compositionally biased toward polar residues. The span at 160 to 179 (SGPTSDPGTPTTITSSSCTN) shows a compositional bias: low complexity. The C2H2-type 1 zinc finger occupies 248–272 (FRCKDCSAAYDTLVELTVHMNETGH). The segment covering 274–286 (RDDNRDREAERTK) has biased composition (basic and acidic residues). The tract at residues 274–300 (RDDNRDREAERTKRWSKPRKRSLMEME) is disordered. A C2H2-type 2 zinc finger spans residues 309–333 (LKCMYCGHSFESLQDLSVHMIKTKH). The disordered stretch occupies residues 362–394 (ALPDSPEQAGISPGASVSESAKDPKAANPYVTP). Residues 418–442 (LKCMECGSSHDTLQQLTAHMMVTGH) form a C2H2-type 3 zinc finger. Disordered regions lie at residues 473–530 (PPTT…KIEP) and 849–873 (GRLT…SSFE). Residues 497-529 (HSEEKKDPEKEKVNIGEVEKKIKEENEDPEKIE) show a composition bias toward basic and acidic residues. The span at 853-862 (PKSSTPSTVS) shows a compositional bias: polar residues. The homeobox DNA-binding region spans 885-955 (RKGRQSNWNP…NVKYQLRRTG (71 aa)). 2 C2H2-type zinc fingers span residues 970-992 (FFCN…LETH) and 1037-1060 (FQCK…SKTH).

It belongs to the teashirt C2H2-type zinc-finger protein family.

Its subcellular location is the nucleus. Functionally, probable transcriptional regulator involved in developmental processes. May act as a transcriptional repressor (Potential). Involved in two major neuronal regionalization processes: primary anteroposterior (AP) axis patterning of the CNS and segmentation of the cranial neuronal crest (CNS) development. The sequence is that of Teashirt homolog 1-B (tshz1-b) from Xenopus laevis (African clawed frog).